We begin with the raw amino-acid sequence, 150 residues long: Large ribosomal subunit protein uL15 (150 aa).

Residues 12–43 (AKKRKKRVGCGESSGHGKTSGRGHKGQKARAG) form a disordered region. A compositionally biased stretch (basic residues) spans 30–39 (TSGRGHKGQK).

Belongs to the universal ribosomal protein uL15 family. As to quaternary structure, part of the 50S ribosomal subunit.

Its function is as follows. Binds to the 23S rRNA. This chain is Large ribosomal subunit protein uL15, found in Methylacidiphilum infernorum (isolate V4) (Methylokorus infernorum (strain V4)).